Here is a 122-residue protein sequence, read N- to C-terminus: Large ribosomal subunit protein bL12 (122 aa).

It belongs to the bacterial ribosomal protein bL12 family. As to quaternary structure, homodimer. Part of the ribosomal stalk of the 50S ribosomal subunit. Forms a multimeric L10(L12)X complex, where L10 forms an elongated spine to which 2 to 4 L12 dimers bind in a sequential fashion. Binds GTP-bound translation factors.

Its function is as follows. Forms part of the ribosomal stalk which helps the ribosome interact with GTP-bound translation factors. Is thus essential for accurate translation. The sequence is that of Large ribosomal subunit protein bL12 from Buchnera aphidicola subsp. Baizongia pistaciae (strain Bp).